Here is a 388-residue protein sequence, read N- to C-terminus: Putative nickel insertion protein (388 aa).

The protein belongs to the LarC family.

The sequence is that of Putative nickel insertion protein from Syntrophobacter fumaroxidans (strain DSM 10017 / MPOB).